The sequence spans 321 residues: Probable arabinan endo-1,5-alpha-L-arabinosidase A (321 aa).

A signal peptide spans 1–19; it reads MHPSTFVTTIACLAGLAHG. Catalysis depends on D34, which acts as the Proton acceptor. E200 acts as the Proton donor in catalysis.

This sequence belongs to the glycosyl hydrolase 43 family.

Its subcellular location is the secreted. The catalysed reaction is Endohydrolysis of (1-&gt;5)-alpha-arabinofuranosidic linkages in (1-&gt;5)-arabinans.. It participates in glycan metabolism; L-arabinan degradation. In terms of biological role, endo-1,5-alpha-L-arabinanase involved in degradation of pectin. Its preferred substrate is linear 1,5-alpha-L-arabinan. This Aspergillus clavatus (strain ATCC 1007 / CBS 513.65 / DSM 816 / NCTC 3887 / NRRL 1 / QM 1276 / 107) protein is Probable arabinan endo-1,5-alpha-L-arabinosidase A (abnA).